Consider the following 513-residue polypeptide: Ribonuclease Y (513 aa).

Residues 6–26 (YIIIAVVIIIICVILGLYIVD) form a helical membrane-spanning segment. Positions 203 to 288 (TVHVVNLPND…EMVEKAKKEV (86 aa)) constitute a KH domain. An HD domain is found at 329 to 422 (VLKHSIEVSH…VQAADAISAA (94 aa)).

It belongs to the RNase Y family.

Its subcellular location is the cell membrane. Its function is as follows. Endoribonuclease that initiates mRNA decay. This Clostridium botulinum (strain ATCC 19397 / Type A) protein is Ribonuclease Y.